Consider the following 627-residue polypeptide: Transketolase-like protein 2 (627 aa).

His39 is a substrate binding site. Residues Ser42, His79, and 125–127 (GSL) each bind thiamine diphosphate. Asp157 is a Mg(2+) binding site. Gly158 and Asn187 together coordinate thiamine diphosphate. Positions 187 and 189 each coordinate Mg(2+). Residues Lys249 and His263 each coordinate thiamine diphosphate. Residues His263, Arg323, and Ser350 each coordinate substrate. 2 residues coordinate thiamine diphosphate: Glu371 and Phe397. The active-site Proton donor is Glu371. Substrate contacts are provided by His421 and Asp429. Thiamine diphosphate is bound at residue Gln433. Arg479 serves as a coordination point for substrate.

This sequence belongs to the transketolase family. Homodimer. Mg(2+) serves as cofactor. Ca(2+) is required as a cofactor. The cofactor is Mn(2+). Requires Co(2+) as cofactor. It depends on thiamine diphosphate as a cofactor.

The catalysed reaction is D-sedoheptulose 7-phosphate + D-glyceraldehyde 3-phosphate = aldehydo-D-ribose 5-phosphate + D-xylulose 5-phosphate. In terms of biological role, plays an essential role in total transketolase activity and cell proliferation in cancer cells; after transfection with anti-TKTL1 siRNA, total transketolase activity dramatically decreases and proliferation was significantly inhibited in cancer cells. Plays a pivotal role in carcinogenesis. This is Transketolase-like protein 2 (Tktl2) from Mus musculus (Mouse).